We begin with the raw amino-acid sequence, 466 residues long: 3-isopropylmalate dehydratase large subunit (466 aa).

The [4Fe-4S] cluster site is built by cysteine 347, cysteine 407, and cysteine 410.

The protein belongs to the aconitase/IPM isomerase family. LeuC type 1 subfamily. As to quaternary structure, heterodimer of LeuC and LeuD. [4Fe-4S] cluster is required as a cofactor.

The enzyme catalyses (2R,3S)-3-isopropylmalate = (2S)-2-isopropylmalate. It functions in the pathway amino-acid biosynthesis; L-leucine biosynthesis; L-leucine from 3-methyl-2-oxobutanoate: step 2/4. Catalyzes the isomerization between 2-isopropylmalate and 3-isopropylmalate, via the formation of 2-isopropylmaleate. This Serratia proteamaculans (strain 568) protein is 3-isopropylmalate dehydratase large subunit.